Consider the following 543-residue polypeptide: MSFNVNWNSLETDSLRSWTVELLTEALNSGKRPNILASDITIKDLNFGKIAPRFEILEIGELDRDRFRGIFKIDYNGDFHLTLHTKVQANPLKIYSDNSLEKEISASSPFVTPDFLLSSDAFNIPLDLKLSDIKISGIGIIVFSKSKGLTMVFRNDPLDSIKVSSTFDTVQVLATFLQNQIENQIRDLFRETLPTLLHKVSLKYTSSNNTNDIIDNLKDHLSNNVYSNALESLEVENVSPGNLQKLAKIYSSRETLKLNVPKLKRIVQRNHLEKFNKNLNPNLASCLYTNMGLQEYSGFSGVSSSYNSIPVGLIANEDFKKVDEILQEISSIQSKNFKSGSNDHKPAKRRTIKLGKGMRQKKVDMQNVDESTLNSINMSRCATEYCDTLSDVSTVLSDDQHNHIEQPTPLKVFTDTRPPLRNVVYTEGYKCSSPMNSNSSFVGSVGLGNNFFQIASGCAPSASPLRNDLSGQKSVHSHDVKVKVKKSMNRIDVSQINEKLNGGFNNGTSKEAMHNENKAFSHNDPSITPFELPPPPYHQLSRA.

Residues 1–202 (MSFNVNWNSL…LPTLLHKVSL (202 aa)) form the SMP-LTD domain. The segment at 519 to 543 (AFSHNDPSITPFELPPPPYHQLSRA) is disordered.

The protein belongs to the MDM34 family. In terms of assembly, component of the ER-mitochondria encounter structure (ERMES) or MDM complex, composed of MMM1, MDM10, MDM12 and MDM34.

It is found in the mitochondrion outer membrane. Functionally, component of the ERMES/MDM complex, which serves as a molecular tether to connect the endoplasmic reticulum (ER) and mitochondria. Components of this complex are involved in the control of mitochondrial shape and protein biogenesis, and function in nonvesicular lipid trafficking between the ER and mitochondria. MDM34 is required for the interaction of the ER-resident membrane protein MMM1 and the outer mitochondrial membrane-resident beta-barrel protein MDM10. The protein is Mitochondrial distribution and morphology protein 34 of Clavispora lusitaniae (strain ATCC 42720) (Yeast).